The following is a 388-amino-acid chain: Succinate--CoA ligase [ADP-forming] subunit beta (388 aa).

An ATP-grasp domain is found at Lys-9–His-244. Residues Lys-46, Gly-53–Gly-55, Glu-99, Ser-102, and Glu-107 each bind ATP. Positions 199 and 213 each coordinate Mg(2+). Substrate contacts are provided by residues Asn-264 and Gly-321–Val-323.

This sequence belongs to the succinate/malate CoA ligase beta subunit family. As to quaternary structure, heterotetramer of two alpha and two beta subunits. Mg(2+) is required as a cofactor.

The catalysed reaction is succinate + ATP + CoA = succinyl-CoA + ADP + phosphate. It carries out the reaction GTP + succinate + CoA = succinyl-CoA + GDP + phosphate. It participates in carbohydrate metabolism; tricarboxylic acid cycle; succinate from succinyl-CoA (ligase route): step 1/1. Functionally, succinyl-CoA synthetase functions in the citric acid cycle (TCA), coupling the hydrolysis of succinyl-CoA to the synthesis of either ATP or GTP and thus represents the only step of substrate-level phosphorylation in the TCA. The beta subunit provides nucleotide specificity of the enzyme and binds the substrate succinate, while the binding sites for coenzyme A and phosphate are found in the alpha subunit. The polypeptide is Succinate--CoA ligase [ADP-forming] subunit beta (Aliivibrio fischeri (strain ATCC 700601 / ES114) (Vibrio fischeri)).